Reading from the N-terminus, the 629-residue chain is Hemocyanin G chain (629 aa).

Positions 171, 175, 202, 322, 326, and 362 each coordinate Cu cation. 2 N-linked (GlcNAc...) asparagine glycosylation sites follow: asparagine 447 and asparagine 506. An intrachain disulfide couples cysteine 534 to cysteine 582. Residue asparagine 615 is glycosylated (N-linked (GlcNAc...) asparagine).

Belongs to the tyrosinase family. Hemocyanin subfamily. As to quaternary structure, tarantula hemocyanin is a 24-chain polymer with seven different chains identified. Hemolymph.

The protein localises to the secreted. It is found in the extracellular space. In terms of biological role, hemocyanins are copper-containing oxygen carriers occurring freely dissolved in the hemolymph of many mollusks and arthropods. The protein is Hemocyanin G chain (HCG) of Aphonopelma sp. (American tarantula).